Here is a 550-residue protein sequence, read N- to C-terminus: Probable importin subunit alpha-A (550 aa).

Over residues 1-30 (MSSRDKQDSRKKEFKKSLDSETARRKREEN) the composition is skewed to basic and acidic residues. Residues 1 to 34 (MSSRDKQDSRKKEFKKSLDSETARRKREENSIGI) form a disordered region. In terms of domain architecture, IBB spans 1-56 (MSSRDKQDSRKKEFKKSLDSETARRKREENSIGIRKNAREELMLKRRGIVQPNPST). 8 ARM repeats span residues 116–155 (YPPI…NIAS), 158–198 (NRQT…NIAG), 201–241 (VDSR…KIGL), 256–297 (KPQP…YLCD), 300–339 (NTKI…NIVT), 342–381 (SSQT…NITA), 385–424 (SQID…NSTN), and 428–467 (TKSI…NIIK).

Belongs to the importin alpha family. As to quaternary structure, forms a complex with tnpo/importin subunit beta.

The protein localises to the cytoplasm. Its subcellular location is the nucleus envelope. Its function is as follows. Functions in nuclear protein import via a substrate-importin alpha-beta transport complex that passes though the nuclear pore complexes (NPC). Binds specifically and directly to substrates containing either a simple or bipartite NLS motif. The protein is Probable importin subunit alpha-A of Dictyostelium discoideum (Social amoeba).